Reading from the N-terminus, the 436-residue chain is Trigger factor (436 aa).

A PPIase FKBP-type domain is found at 163 to 248; it reads GDRVTVDFEG…VKKIEAAHLP (86 aa).

Belongs to the FKBP-type PPIase family. Tig subfamily.

The protein localises to the cytoplasm. It carries out the reaction [protein]-peptidylproline (omega=180) = [protein]-peptidylproline (omega=0). Functionally, involved in protein export. Acts as a chaperone by maintaining the newly synthesized protein in an open conformation. Functions as a peptidyl-prolyl cis-trans isomerase. This chain is Trigger factor, found in Paracidovorax citrulli (strain AAC00-1) (Acidovorax citrulli).